We begin with the raw amino-acid sequence, 794 residues long: Lon protease (794 aa).

In terms of domain architecture, Lon N-terminal spans 29 to 222 (VPLLPLRGVL…TLISIIQDEQ (194 aa)). Residue 374–381 (GPPGVGKT) coordinates ATP. Residues 610–791 (TDQVGMATGL…DEVLEHALVG (182 aa)) form the Lon proteolytic domain. Catalysis depends on residues serine 697 and lysine 740.

This sequence belongs to the peptidase S16 family. In terms of assembly, homohexamer. Organized in a ring with a central cavity.

The protein localises to the cytoplasm. It carries out the reaction Hydrolysis of proteins in presence of ATP.. Its function is as follows. ATP-dependent serine protease that mediates the selective degradation of mutant and abnormal proteins as well as certain short-lived regulatory proteins. Required for cellular homeostasis and for survival from DNA damage and developmental changes induced by stress. Degrades polypeptides processively to yield small peptide fragments that are 5 to 10 amino acids long. Binds to DNA in a double-stranded, site-specific manner. The protein is Lon protease of Bacillus thuringiensis (strain Al Hakam).